The sequence spans 259 residues: Large ribosomal subunit protein uL4 (259 aa).

A disordered region spans residues 47-67; it reads WGTDPMAGKRTTAESFGSGRG.

It belongs to the universal ribosomal protein uL4 family. Part of the 50S ribosomal subunit.

Its function is as follows. One of the primary rRNA binding proteins, this protein initially binds near the 5'-end of the 23S rRNA. It is important during the early stages of 50S assembly. It makes multiple contacts with different domains of the 23S rRNA in the assembled 50S subunit and ribosome. Functionally, forms part of the polypeptide exit tunnel. This chain is Large ribosomal subunit protein uL4, found in Methanosphaera stadtmanae (strain ATCC 43021 / DSM 3091 / JCM 11832 / MCB-3).